Consider the following 425-residue polypeptide: G protein-activated inward rectifier potassium channel 2 (425 aa).

Residues 1–91 (MTMAKLTESM…IFTTLVDLKW (91 aa)) are Cytoplasmic-facing. A phosphoserine mark is found at serine 18 and serine 25. A helical membrane pass occupies residues 92-116 (RFNLLIFVMVYTVTWLFFGMIWWLI). The Extracellular segment spans residues 117–140 (AYIRGDMDHIEDPSWTPCVTNLNG). The segment at residues 141-152 (FVSAFLFSIETE) is an intramembrane region (helical; Pore-forming). Positions 153–159 (TTIGYGY) form an intramembrane region, pore-forming. Positions 154 to 159 (TIGYGY) match the Selectivity filter motif. The Extracellular portion of the chain corresponds to 160–168 (RVITDKCPE). Residues 169–190 (GIILLLIQSVLGSIVNAFMVGC) traverse the membrane as a helical segment. The Cytoplasmic portion of the chain corresponds to 191-425 (MFVKISQPKK…VANLENESKV (235 aa)). A disordered region spans residues 392-425 (NQHAELETEEEEKNPEELTERNGDVANLENESKV). The PDZ-binding motif lies at 422–425 (ESKV).

This sequence belongs to the inward rectifier-type potassium channel (TC 1.A.2.1) family. KCNJ6 subfamily. As to quaternary structure, associates with KCNJ3/GIRK1 or KCNJ5/GRIK4 to form a G-protein-activated heteromultimer pore-forming unit. The resulting inward current is much larger. Interacts (via PDZ-binding motif) with SNX27 (via PDZ domain); the interaction is required for recycling to the plasma membrane when endocytosed and prevent degradation in lysosomes. As to expression, pancreatic beta cells and brain.

It is found in the membrane. The catalysed reaction is K(+)(in) = K(+)(out). Its activity is regulated as follows. Activated by phosphatidylinositol 4,5 biphosphate (PtdIns(4,5)P2). Its function is as follows. Inward rectifier potassium channels are characterized by a greater tendency to allow potassium to flow into the cell rather than out of it. Their voltage dependence is regulated by the concentration of extracellular potassium; as external potassium is raised, the voltage range of the channel opening shifts to more positive voltages. The inward rectification is mainly due to the blockage of outward current by internal magnesium. This potassium channel may be involved in the regulation of insulin secretion by glucose and/or neurotransmitters acting through G-protein-coupled receptors. The protein is G protein-activated inward rectifier potassium channel 2 (Kcnj6) of Rattus norvegicus (Rat).